The sequence spans 507 residues: Arabinose import ATP-binding protein AraG (507 aa).

2 ABC transporter domains span residues 14 to 249 (LRFN…MVGR) and 249 to 505 (RDIQ…LPRT). 46-53 (GENGAGKS) contributes to the ATP binding site.

This sequence belongs to the ABC transporter superfamily. Arabinose importer (TC 3.A.1.2.2) family. In terms of assembly, the complex is composed of two ATP-binding proteins (AraG), two transmembrane proteins (AraH) and a solute-binding protein (AraF).

It is found in the cell inner membrane. It carries out the reaction L-arabinose(out) + ATP + H2O = L-arabinose(in) + ADP + phosphate + H(+). Functionally, part of the ABC transporter complex AraFGH involved in arabinose import. Responsible for energy coupling to the transport system. The sequence is that of Arabinose import ATP-binding protein AraG from Pseudomonas syringae pv. syringae (strain B728a).